A 1381-amino-acid polypeptide reads, in one-letter code: Hepatocyte growth factor receptor (1381 aa).

An N-terminal signal peptide occupies residues 1–24; the sequence is MKAPAVLVPGILVLLFTLVQRSNG. The Extracellular portion of the chain corresponds to 25 to 932; it reads ECKEALAKSE…VIVQPDQNFT (908 aa). The Sema domain occupies 27 to 515; sequence KEALAKSEMN…TGKKITKIPL (489 aa). Residue N45 is glycosylated (N-linked (GlcNAc...) asparagine). Cystine bridges form between C95–C101, C98–C160, C133–C141, and C172–C175. An N-linked (GlcNAc...) asparagine glycan is attached at N106. An N-linked (GlcNAc...) asparagine glycan is attached at N149. The N-linked (GlcNAc...) asparagine glycan is linked to N202. 2 disulfides stabilise this stretch: C298/C363 and C385/C397. N-linked (GlcNAc...) asparagine glycosylation is found at N399 and N405. Intrachain disulfides connect C520–C538, C526–C561, C529–C545, and C541–C551. 3 consecutive IPT/TIG domains span residues 563-655, 657-739, and 742-836; these read PAIY…FSYV, PIIT…FSYR, and PIVY…LIYV. O-linked (Man) threonine glycosylation is present at T582. N-linked (GlcNAc...) asparagine glycans are attached at residues N607 and N635. O-linked (Man) threonine glycans are attached at residues T676 and T761. N-linked (GlcNAc...) asparagine glycans are attached at residues N785, N879, and N930. A helical transmembrane segment spans residues 933–955; sequence GLIAGVVSISIALLLLLGLFLWL. The Cytoplasmic portion of the chain corresponds to 956–1381; that stretch reads KKRKQIKDLG…EDNADDEVDT (426 aa). S966 is subject to Phosphoserine. T977 is subject to Phosphothreonine. Residues S990, S997, and S1000 each carry the phosphoserine modification. Y1003 carries the phosphotyrosine modification. The region spanning 1078–1345 is the Protein kinase domain; that stretch reads VHFNEVIGRG…RISAIFSTFI (268 aa). ATP contacts are provided by residues 1084–1092 and K1110; that span reads IGRGHFGCV. The Proton acceptor role is filled by D1204. Residues 1212–1381 are interaction with RANBP9; the sequence is LDEKFTVKVA…EDNADDEVDT (170 aa). At Y1230 the chain carries Phosphotyrosine. Residues Y1234 and Y1235 each carry the phosphotyrosine; by autocatalysis modification. Phosphothreonine is present on T1289. An interaction with MUC20 region spans residues 1320–1359; sequence WHPKAEMRPSFSELVSRISAIFSTFIGEHYVHVNATYVNV. Phosphotyrosine; by autocatalysis is present on residues Y1349 and Y1356. Phosphotyrosine is present on Y1365.

The protein belongs to the protein kinase superfamily. Tyr protein kinase family. Heterodimer made of an alpha chain (50 kDa) and a beta chain (145 kDa) which are disulfide linked. Binds PLXNB1. Interacts when phosphorylated with downstream effectors including STAT3, PIK3R1, SRC, PCLG1, GRB2 and GAB1. Interacts with SPSB1, SPSB2 and SPSB4. Interacts with INPP5D/SHIP1. When phosphorylated at Tyr-1356, interacts with INPPL1/SHIP2. Interacts with RANBP9 and RANBP10, as well as SPSB1, SPSB2, SPSB3 and SPSB4. SPSB1 binding occurs in the presence and in the absence of HGF, however HGF treatment has a positive effect on this interaction. Interacts with MUC20; prevents interaction with GRB2 and suppresses hepatocyte growth factor-induced cell proliferation. Interacts with GRB10. Interacts with PTPN1 and PTPN2. Interacts with HSP90AA1 and HSP90AB1; the interaction suppresses MET kinase activity. Interacts with tensin TNS3. Interacts (when phosphorylated) with tensin TNS4 (via SH2 domain); the interaction increases MET protein stability by inhibiting MET endocytosis and subsequent lysosomal degradation. Autophosphorylated in response to ligand binding on Tyr-1234 and Tyr-1235 in the kinase domain leading to further phosphorylation of Tyr-1349 and Tyr-1356 in the C-terminal multifunctional docking site. Dephosphorylated by PTPRJ at Tyr-1349 and Tyr-1365. Dephosphorylated by PTPN1 and PTPN2. Post-translationally, ubiquitinated. Ubiquitination by CBL regulates the receptor stability and activity through proteasomal degradation. In terms of processing, O-mannosylation of IPT/TIG domains by TMEM260 is required for protein maturation. O-mannosylated residues are composed of single mannose glycans that are not elongated or modified.

The protein resides in the membrane. It carries out the reaction L-tyrosyl-[protein] + ATP = O-phospho-L-tyrosyl-[protein] + ADP + H(+). In its inactive state, the C-terminal tail interacts with the catalytic domain and inhibits the kinase activity. Upon ligand binding, the C-terminal tail is displaced and becomes phosphorylated, thus increasing the kinase activity. In terms of biological role, receptor tyrosine kinase that transduces signals from the extracellular matrix into the cytoplasm by binding to hepatocyte growth factor/HGF ligand. Regulates many physiological processes including proliferation, scattering, morphogenesis and survival. Ligand binding at the cell surface induces autophosphorylation of MET on its intracellular domain that provides docking sites for downstream signaling molecules. Following activation by ligand, interacts with the PI3-kinase subunit PIK3R1, PLCG1, SRC, GRB2, STAT3 or the adapter GAB1. Recruitment of these downstream effectors by MET leads to the activation of several signaling cascades including the RAS-ERK, PI3 kinase-AKT, or PLCgamma-PKC. The RAS-ERK activation is associated with the morphogenetic effects while PI3K/AKT coordinates prosurvival effects. During embryonic development, MET signaling plays a role in gastrulation, development and migration of muscles and neuronal precursors, angiogenesis and kidney formation. In adults, participates in wound healing as well as organ regeneration and tissue remodeling. Also promotes differentiation and proliferation of hematopoietic cells. The polypeptide is Hepatocyte growth factor receptor (MET) (Papio anubis (Olive baboon)).